The chain runs to 354 residues: Probable butyrate kinase (354 aa).

It belongs to the acetokinase family.

It localises to the cytoplasm. It carries out the reaction butanoate + ATP = butanoyl phosphate + ADP. This chain is Probable butyrate kinase, found in Phocaeicola vulgatus (strain ATCC 8482 / DSM 1447 / JCM 5826 / CCUG 4940 / NBRC 14291 / NCTC 11154) (Bacteroides vulgatus).